The sequence spans 241 residues: ATP synthase subunit a (241 aa).

Transmembrane regions (helical) follow at residues 27 to 47 (NCSLVMVLASVSSILLLCWAL), 52 to 72 (VVPGPSQTAVELIYGFVANTL), 87 to 107 (VMTTFLFVLACNLVGILPFGF), 112 to 132 (HLSVTLALSLVVCTAITVIGF), 142 to 162 (IFLPEGTPLWLAPMMVFIKLF), 175 to 195 (LAANMIAGHTIIAVIADFVLK), and 198 to 218 (LVLAPLPFAFIMGLIAFEIFV).

This sequence belongs to the ATPase A chain family. As to quaternary structure, F-type ATPases have 2 components, CF(1) - the catalytic core - and CF(0) - the membrane proton channel. CF(1) has five subunits: alpha(3), beta(3), gamma(1), delta(1), epsilon(1). CF(0) has three main subunits: a(1), b(2) and c(9-12). The alpha and beta chains form an alternating ring which encloses part of the gamma chain. CF(1) is attached to CF(0) by a central stalk formed by the gamma and epsilon chains, while a peripheral stalk is formed by the delta and b chains.

It is found in the cell inner membrane. Key component of the proton channel; it plays a direct role in the translocation of protons across the membrane. The chain is ATP synthase subunit a from Anaplasma marginale (strain St. Maries).